We begin with the raw amino-acid sequence, 469 residues long: 3-isopropylmalate dehydratase large subunit (469 aa).

3 residues coordinate [4Fe-4S] cluster: Cys347, Cys408, and Cys411.

This sequence belongs to the aconitase/IPM isomerase family. LeuC type 1 subfamily. As to quaternary structure, heterodimer of LeuC and LeuD. It depends on [4Fe-4S] cluster as a cofactor.

It catalyses the reaction (2R,3S)-3-isopropylmalate = (2S)-2-isopropylmalate. It functions in the pathway amino-acid biosynthesis; L-leucine biosynthesis; L-leucine from 3-methyl-2-oxobutanoate: step 2/4. Its function is as follows. Catalyzes the isomerization between 2-isopropylmalate and 3-isopropylmalate, via the formation of 2-isopropylmaleate. The polypeptide is 3-isopropylmalate dehydratase large subunit (Actinobacillus succinogenes (strain ATCC 55618 / DSM 22257 / CCUG 43843 / 130Z)).